A 618-amino-acid polypeptide reads, in one-letter code: Kelch-like protein 40b (618 aa).

The BTB domain occupies 33-100; sequence VDCVLKIKDK…LYTSNINVTE (68 aa). A BACK domain is found at 135-237; sequence CLAIFRLGLM…PRDYFVKNVE (103 aa). A compositionally biased stretch (basic and acidic residues) spans 264-284; sequence PELKKTKNKKSPSEEGQKKGD. The segment at 264 to 297 is disordered; the sequence is PELKKTKNKKSPSEEGQKKGDEEEVEEEEEQEER. Residues 285 to 295 show a composition bias toward acidic residues; it reads EEEVEEEEEQE. Kelch repeat units follow at residues 356-408, 409-458, 459-506, 508-553, and 555-608; these read QIFV…EAEN, FIFV…SHNE, MIYV…IHKN, IYVV…SVSG, and LYAV…VLGV.

Belongs to the KLHL40 family. As to quaternary structure, component of the BCR(KLHL40) E3 ubiquitin ligase complex. Expressed in skeletal muscle. Detected in the eye at much lower levels.

It localises to the cytoplasm. Its subcellular location is the myofibril. The protein localises to the sarcomere. It is found in the a band. The protein resides in the i band. Its function is as follows. Substrate-specific adapter of a BCR (BTB-CUL3-RBX1) E3 ubiquitin ligase complex. Required for skeletal muscle development. This is Kelch-like protein 40b (klhl40b) from Danio rerio (Zebrafish).